The sequence spans 479 residues: Ribosomal RNA small subunit methyltransferase F (479 aa).

S-adenosyl-L-methionine contacts are provided by residues 125 to 131, Glu149, Asp176, and Asp194; that span reads AAAPGSK. The Nucleophile role is filled by Cys247.

The protein belongs to the class I-like SAM-binding methyltransferase superfamily. RsmB/NOP family.

It is found in the cytoplasm. It catalyses the reaction cytidine(1407) in 16S rRNA + S-adenosyl-L-methionine = 5-methylcytidine(1407) in 16S rRNA + S-adenosyl-L-homocysteine + H(+). Functionally, specifically methylates the cytosine at position 1407 (m5C1407) of 16S rRNA. In Escherichia fergusonii (strain ATCC 35469 / DSM 13698 / CCUG 18766 / IAM 14443 / JCM 21226 / LMG 7866 / NBRC 102419 / NCTC 12128 / CDC 0568-73), this protein is Ribosomal RNA small subunit methyltransferase F.